The following is a 442-amino-acid chain: 26S proteasome regulatory subunit 6A (442 aa).

Ser12 carries the post-translational modification Phosphoserine. An ATP-binding site is contributed by 230 to 237 (GPPGTGKT). Ser379 is modified (phosphoserine).

It belongs to the AAA ATPase family. Component of the 19S proteasome regulatory particle complex. The 26S proteasome consists of a 20S core particle (CP) and two 19S regulatory subunits (RP). The regulatory particle is made of a lid composed of 9 subunits, a base containing 6 ATPases including PSMC3 and few additional components. Interacts with PAAF1.

Its subcellular location is the cytoplasm. The protein localises to the nucleus. Functionally, component of the 26S proteasome, a multiprotein complex involved in the ATP-dependent degradation of ubiquitinated proteins. This complex plays a key role in the maintenance of protein homeostasis by removing misfolded or damaged proteins, which could impair cellular functions, and by removing proteins whose functions are no longer required. Therefore, the proteasome participates in numerous cellular processes, including cell cycle progression, apoptosis, or DNA damage repair. PSMC3 belongs to the heterohexameric ring of AAA (ATPases associated with diverse cellular activities) proteins that unfolds ubiquitinated target proteins that are concurrently translocated into a proteolytic chamber and degraded into peptides. The polypeptide is 26S proteasome regulatory subunit 6A (Psmc3) (Mus musculus (Mouse)).